The sequence spans 238 residues: tRNA (guanine-N(7)-)-methyltransferase (238 aa).

Glutamate 70, aspartate 95, aspartate 122, and aspartate 145 together coordinate S-adenosyl-L-methionine. The active site involves aspartate 145. Residues lysine 149, aspartate 181, and 216 to 219 (TKFE) each bind substrate.

It belongs to the class I-like SAM-binding methyltransferase superfamily. TrmB family.

It carries out the reaction guanosine(46) in tRNA + S-adenosyl-L-methionine = N(7)-methylguanosine(46) in tRNA + S-adenosyl-L-homocysteine. It functions in the pathway tRNA modification; N(7)-methylguanine-tRNA biosynthesis. Catalyzes the formation of N(7)-methylguanine at position 46 (m7G46) in tRNA. This chain is tRNA (guanine-N(7)-)-methyltransferase, found in Neisseria meningitidis serogroup B (strain ATCC BAA-335 / MC58).